The primary structure comprises 381 residues: Regulatory protein RapF (381 aa).

The Mn(2+) site is built by Leu-40, Met-43, and Glu-45. 6 TPR repeats span residues 101-137 (YYFN…VKDR), 148-181 (SESY…NIRL), 182-215 (LQCH…AEAE), 222-255 (GRTL…FEES), 262-295 (PQAY…SQKA), and 337-370 (EDFA…RQLI).

The protein belongs to the Rap family. Monomer. Is monomeric either alone or in complex with PhrF. Interacts specifically with the C-terminal DNA-binding domain of ComA. Interacts with PhrF.

It is found in the cytoplasm. Its activity is regulated as follows. Inhibited by PhrF, which prevents RapF-ComA interaction. Interaction with PhrF induces a conformational change in RapF, which is propagated to the ComA binding site and causes the dissociation of ComA from RapF. Its function is as follows. Involved in the regulation of genetic competence development. Inhibits the activity of ComA, a transcriptional factor that regulates the development of genetic competence. Acts by binding to ComA, leading to the inhibition of its DNA-binding activity. May also affect transcription independently of ComA. This Bacillus subtilis (strain 168) protein is Regulatory protein RapF (rapF).